Here is a 1183-residue protein sequence, read N- to C-terminus: Translation initiation factor IF-2 (1183 aa).

Disordered regions lie at residues 55 to 512 (KSKT…KVHI) and 538 to 574 (ASLARPSKPKVGKRNNGKPLTALKKRKKETTRQRQRR). Over residues 83-99 (TQKDQKTEPKKKNHDQT) the composition is skewed to basic and acidic residues. 2 stretches are compositionally biased toward polar residues: residues 100–143 (ELSQ…QITA) and 165–177 (KPLTQAESTIPQS). Residues 220–229 (PKIDIQDKKP) show a composition bias toward basic and acidic residues. Over residues 231-252 (QPNNQKAKTRINQGEISPQKVG) the composition is skewed to polar residues. The span at 253–267 (QGNIQKIKSQNKQNQ) shows a compositional bias: low complexity. Basic and acidic residues predominate over residues 288-304 (IRREKPVNKPHTNEVRN). Composition is skewed to polar residues over residues 324–349 (QGLSNRPGSNNKIGGTGRPGSQNRQG) and 357–367 (NRTTQGQNRPG). A compositionally biased stretch (basic and acidic residues) spans 485–499 (GRPDWDDSAKLDALR). 2 stretches are compositionally biased toward basic residues: residues 544–553 (SKPKVGKRNN) and 560–574 (LKKRKKETTRQRQRR). Residues 675–847 (RRPPVVTVMG…VLLVTEVEDL (173 aa)) enclose the tr-type G domain. The interval 684-691 (GHVDHGKT) is G1. 684–691 (GHVDHGKT) serves as a coordination point for GTP. The G2 stretch occupies residues 709–713 (GITQH). Residues 734-737 (DTPG) are G3. GTP-binding positions include 734–738 (DTPGH) and 788–791 (NKID). The interval 788–791 (NKID) is G4. Positions 824–826 (SAI) are G5.

This sequence belongs to the TRAFAC class translation factor GTPase superfamily. Classic translation factor GTPase family. IF-2 subfamily.

It is found in the cytoplasm. One of the essential components for the initiation of protein synthesis. Protects formylmethionyl-tRNA from spontaneous hydrolysis and promotes its binding to the 30S ribosomal subunits. Also involved in the hydrolysis of GTP during the formation of the 70S ribosomal complex. This Prochlorococcus marinus (strain NATL1A) protein is Translation initiation factor IF-2.